We begin with the raw amino-acid sequence, 311 residues long: Ketoisovalerate oxidoreductase subunit VorB (311 aa).

In terms of assembly, heterotetramer of one alpha, one beta, one delta and one gamma chain.

The catalysed reaction is 3-methyl-2-oxobutanoate + 2 oxidized [2Fe-2S]-[ferredoxin] + CoA = 2-methylpropanoyl-CoA + 2 reduced [2Fe-2S]-[ferredoxin] + CO2 + H(+). The chain is Ketoisovalerate oxidoreductase subunit VorB (vorB) from Pyrococcus horikoshii (strain ATCC 700860 / DSM 12428 / JCM 9974 / NBRC 100139 / OT-3).